Consider the following 319-residue polypeptide: Acetyl esterase (319 aa).

An Involved in the stabilization of the negatively charged intermediate by the formation of the oxyanion hole motif is present at residues 91-93 (HGG). Catalysis depends on residues Ser165, Asp262, and His292.

It belongs to the 'GDXG' lipolytic enzyme family. In terms of assembly, homodimer. Interacts with MalT and MelA.

It localises to the cytoplasm. Its function is as follows. Displays esterase activity towards short chain fatty esters (acyl chain length of up to 8 carbons). Able to hydrolyze triacetylglycerol (triacetin) and tributyrylglycerol (tributyrin), but not trioleylglycerol (triolein) or cholesterol oleate. Negatively regulates MalT activity by antagonizing maltotriose binding. Inhibits MelA galactosidase activity. This Escherichia coli O157:H7 protein is Acetyl esterase.